The sequence spans 129 residues: MAKPGTRTRKKVKKTVVDGVAHIHASFNNTIVTISDRQGNVLSWATSGGSGFRGSRKSTPFAAQVAAERAGNAAAEYGLKNLDVEVKGPGPGRESAVRALNACGYKITNITDVTPIPHNGCRPPKKRRV.

It belongs to the universal ribosomal protein uS11 family. As to quaternary structure, part of the 30S ribosomal subunit. Interacts with proteins S7 and S18. Binds to IF-3.

Its function is as follows. Located on the platform of the 30S subunit, it bridges several disparate RNA helices of the 16S rRNA. Forms part of the Shine-Dalgarno cleft in the 70S ribosome. This is Small ribosomal subunit protein uS11 from Marinobacter nauticus (strain ATCC 700491 / DSM 11845 / VT8) (Marinobacter aquaeolei).